Reading from the N-terminus, the 388-residue chain is Chalcone synthase LF3 (388 aa).

Cys164 is an active-site residue.

This sequence belongs to the thiolase-like superfamily. Chalcone/stilbene synthases family.

It carries out the reaction (E)-4-coumaroyl-CoA + 3 malonyl-CoA + 3 H(+) = 2',4,4',6'-tetrahydroxychalcone + 3 CO2 + 4 CoA. It participates in secondary metabolite biosynthesis; flavonoid biosynthesis. Its function is as follows. The primary product of this enzyme is 4,2',4',6'-tetrahydroxychalcone (also termed naringenin-chalcone or chalcone) which can under specific conditions spontaneously isomerize into naringenin. The polypeptide is Chalcone synthase LF3 (CHS-LF3) (Ipomoea batatas (Sweet potato)).